Here is a 134-residue protein sequence, read N- to C-terminus: Endoribonuclease YbeY (134 aa).

Residues His94, His98, and His104 each coordinate Zn(2+).

Belongs to the endoribonuclease YbeY family. Zn(2+) is required as a cofactor.

It is found in the cytoplasm. Single strand-specific metallo-endoribonuclease involved in late-stage 70S ribosome quality control and in maturation of the 3' terminus of the 16S rRNA. This is Endoribonuclease YbeY from Campylobacter jejuni subsp. jejuni serotype O:23/36 (strain 81-176).